Reading from the N-terminus, the 610-residue chain is Zinc metalloproteinase-disintegrin-like 4a (610 aa).

A signal peptide spans 1–20 (MIQVLLVTISLAVFPYQGSS). Residues 21 to 189 (VILESGNVND…KKASQSNLTP (169 aa)) constitute a propeptide that is removed on maturation. The Peptidase M12B domain occupies 199 to 395 (KYVKLFLVAD…NMPQCILKKP (197 aa)). A glycan (N-linked (GlcNAc...) asparagine) is linked at Asn218. Residue Asp286 participates in Ca(2+) binding. Disulfide bonds link Cys310/Cys390, Cys350/Cys374, and Cys352/Cys357. Position 335 (His335) interacts with Zn(2+). Residue Glu336 is part of the active site. His339 and His345 together coordinate Zn(2+). The Ca(2+) site is built by Cys390, Val405, Asn408, Phe410, Glu412, Glu415, and Asp418. Residues 403 to 488 (PAVCGNYFVE…AECTDSFQRN (86 aa)) enclose the Disintegrin domain. Cystine bridges form between Cys406–Cys435, Cys417–Cys430, Cys419–Cys425, Cys429–Cys452, Cys443–Cys449, Cys448–Cys474, Cys461–Cys481, Cys468–Cys499, Cys492–Cys504, Cys511–Cys561, Cys526–Cys572, Cys539–Cys549, Cys556–Cys598, and Cys592–Cys603. A D/ECD-tripeptide motif is present at residues 467–469 (ECD).

Belongs to the venom metalloproteinase (M12B) family. P-III subfamily. It depends on Zn(2+) as a cofactor. Expressed by the venom gland.

It is found in the secreted. Its function is as follows. Snake venom metalloproteinase that impairs hemostasis in the envenomed animal. This chain is Zinc metalloproteinase-disintegrin-like 4a, found in Crotalus adamanteus (Eastern diamondback rattlesnake).